The primary structure comprises 230 residues: Probable tetraspanin tspD (230 aa).

The Cytoplasmic portion of the chain corresponds to 1-20 (MVEYLPSTPRYLKVPLIILN). A helical transmembrane segment spans residues 21–41 (VILWLLGLVLVIIGGICVGFF). The Extracellular portion of the chain corresponds to 42 to 65 (SRFKELQEVGGVSESIKSISVSLP). The chain crosses the membrane as a helical span at residues 66 to 86 (AGVLSIGIFFMVLTVAGCIVA). The Cytoplasmic segment spans residues 87 to 90 (YKEK). The chain crosses the membrane as a helical span at residues 91 to 111 (MVGLVFYTILMLVLLVVLIGI). Residues 112 to 200 (GGEALTYHNA…VNSKLYLVGS (89 aa)) are Extracellular-facing. 4 N-linked (GlcNAc...) asparagine glycosylation sites follow: Asn133, Asn138, Asn163, and Asn179. A helical membrane pass occupies residues 201 to 221 (AGVAIGVIELVSLMFALFLIV). At 222 to 230 (RLYKSNSYR) the chain is on the cytoplasmic side.

It belongs to the tetraspanin (TM4SF) family.

The protein localises to the membrane. In Dictyostelium discoideum (Social amoeba), this protein is Probable tetraspanin tspD (tspD).